A 376-amino-acid chain; its full sequence is Pulmonary surfactant-associated protein B (376 aa).

A signal peptide spans 1-24 (MAKLHLQWLLLLPTLCSLGAATES). Residues 25 to 63 (ASSPDCAQGPKFWCQSLEQAIQCRALGHCLQEVWGHAGA) enclose the Saposin A-type domain. Positions 25-190 (ASSPDCAQGP…PHTQDLSEQQ (166 aa)) are excised as a propeptide. Saposin B-type domains follow at residues 63-145 (ANDL…PLGQ), 194-271 (PLPF…STAD), and 290-365 (QDTE…EAPA). Disulfide bonds link cysteine 67/cysteine 141, cysteine 70/cysteine 135, cysteine 98/cysteine 110, cysteine 198/cysteine 267, cysteine 201/cysteine 261, cysteine 225/cysteine 236, cysteine 294/cysteine 361, cysteine 297/cysteine 355, and cysteine 320/cysteine 330. Positions 270-376 (ADAIGPALPA…PLQCFQTPHL (107 aa)) are excised as a propeptide. Asparagine 306 is a glycosylation site (N-linked (GlcNAc...) asparagine).

Homodimer; disulfide-linked.

It localises to the secreted. The protein resides in the extracellular space. Its subcellular location is the surface film. Functionally, pulmonary surfactant-associated proteins promote alveolar stability by lowering the surface tension at the air-liquid interface in the peripheral air spaces. SP-B increases the collapse pressure of palmitic acid to nearly 70 millinewtons per meter. The polypeptide is Pulmonary surfactant-associated protein B (Sftpb) (Rattus norvegicus (Rat)).